Consider the following 278-residue polypeptide: Pantothenate synthetase (278 aa).

30 to 37 (MGFLHEGH) is a binding site for ATP. Catalysis depends on His-37, which acts as the Proton donor. Residue Gln-61 coordinates (R)-pantoate. Position 61 (Gln-61) interacts with beta-alanine. ATP is bound at residue 147–150 (GQKD). Gln-153 is a binding site for (R)-pantoate. ATP is bound by residues Val-176 and 184-187 (LSSR).

Belongs to the pantothenate synthetase family. In terms of assembly, homodimer.

It localises to the cytoplasm. The enzyme catalyses (R)-pantoate + beta-alanine + ATP = (R)-pantothenate + AMP + diphosphate + H(+). It participates in cofactor biosynthesis; (R)-pantothenate biosynthesis; (R)-pantothenate from (R)-pantoate and beta-alanine: step 1/1. In terms of biological role, catalyzes the condensation of pantoate with beta-alanine in an ATP-dependent reaction via a pantoyl-adenylate intermediate. This Thermosipho africanus (strain TCF52B) protein is Pantothenate synthetase.